The following is a 1070-amino-acid chain: DNA-directed RNA polymerase subunit beta (1070 aa).

It belongs to the RNA polymerase beta chain family. As to quaternary structure, in plastids the minimal PEP RNA polymerase catalytic core is composed of four subunits: alpha, beta, beta', and beta''. When a (nuclear-encoded) sigma factor is associated with the core the holoenzyme is formed, which can initiate transcription.

It localises to the plastid. It is found in the chloroplast. The catalysed reaction is RNA(n) + a ribonucleoside 5'-triphosphate = RNA(n+1) + diphosphate. Functionally, DNA-dependent RNA polymerase catalyzes the transcription of DNA into RNA using the four ribonucleoside triphosphates as substrates. The chain is DNA-directed RNA polymerase subunit beta from Angiopteris evecta (Mule's foot fern).